We begin with the raw amino-acid sequence, 212 residues long: Probable GTP-binding protein EngB (212 aa).

An EngB-type G domain is found at Phe25–Tyr199. Residues Gly33 to Ser40, Gly60 to Leu64, Asp78 to Gly81, Thr145 to Asp148, and Phe178 to Ser180 contribute to the GTP site. 2 residues coordinate Mg(2+): Ser40 and Thr62.

This sequence belongs to the TRAFAC class TrmE-Era-EngA-EngB-Septin-like GTPase superfamily. EngB GTPase family. Requires Mg(2+) as cofactor.

Necessary for normal cell division and for the maintenance of normal septation. This chain is Probable GTP-binding protein EngB, found in Hydrogenovibrio crunogenus (strain DSM 25203 / XCL-2) (Thiomicrospira crunogena).